A 532-amino-acid polypeptide reads, in one-letter code: MENYPETQFIPGDSMIQNAIVSYSEESAGRERRTEANNVSASQERQALSRFGGVPQMQNIGQDFGSWRDQASDRNGFQLMSAMAGATGILQTGQGLSLSLGSQILPGIHQISHQNMAPRGNEYATQSFPGGNQNLDVVRTIPNSKYLKAAQQLLDEAVNVKKALKQFQAEGDKNNENPQEPNQSTQDSSTNPPADISQSERQEMQSKLTKLLSMLDEVDRRYKQYYQQMQIVVSSFDVIAGYGAAKPYTALALQTISRHFRSLRDAISGQILVLRKCLGEQQDGSDGKRVGIISRLKYVDQHLRQQRGFMQPQAWRPQRGLPENSVLILRAWLFEHFLHPYPKDSDKIMLARQTGLSRGQVSNWFINARVRLWKPMVEEIYKEEFTENDSNSSSENTPKMSEIGPVAADDEDRAREFSQDQTKPDHGHGYGEETRGMVQGSHMDGRRFMAVEPTYHVADTSRLGRGDVSLTLGLQNSQGQDNVVAMSSEAYNNFSGVDIYENAIPGDEMEYVNPGSRQNRINSSQLVHDFVA.

Positions Ser-144–Val-160 are SR/KY domain. The tract at residues Glu-170–Glu-203 is disordered. The span at Glu-176–Ser-197 shows a compositional bias: polar residues. Residues Glu-200 to Ile-271 form a BELL domain region. A DNA-binding region (homeobox) is located at residues Ala-314–Met-376. The segment at Phe-385–Thr-434 is disordered. Basic and acidic residues predominate over residues Asp-412–Thr-434.

Belongs to the TALE/BELL homeobox family. May form heterodimeric complexes with TALE/KNOX proteins. Interacts with OFP2, OFP4, and OFP5.

It localises to the nucleus. The chain is BEL1-like homeodomain protein 6 (BLH6) from Arabidopsis thaliana (Mouse-ear cress).